The chain runs to 197 residues: Small ribosomal subunit protein uS4B (197 aa).

Positions 88 to 150 constitute an S4 RNA-binding domain; the sequence is SRLDNMVYRM…SRKTEMFVNN (63 aa).

It belongs to the universal ribosomal protein uS4 family. In terms of assembly, part of the 30S ribosomal subunit. Contacts protein S5. The interaction surface between S4 and S5 is involved in control of translational fidelity.

In terms of biological role, one of the primary rRNA binding proteins, it binds directly to 16S rRNA where it nucleates assembly of the body of the 30S subunit. Functionally, with S5 and S12 plays an important role in translational accuracy. The protein is Small ribosomal subunit protein uS4B (rpsD2) of Clostridium perfringens (strain 13 / Type A).